A 235-amino-acid chain; its full sequence is MGKMGGSRHLKSLAAPGYYPIAKRERVWVVKPSPGPHAIDEGIPLLLIVRDMLKLATTAREARRIISMKKILVDGKPRYDYKFQVGLMDVISIPEIGVNYRMVPDPHRFLRLIEIPQSESKMKLVKVIGKRTIRGGRIQLTSHDGRNFLLDGRDVKPGDSLLIELPSQSVIDHLRFDTGSSVLVTRGRMAGRIGRVEGIGTIIEMRDLENPELSYRGVKENLIVVGKERPVLKLR.

Residues 43–114 (IPLLLIVRDM…DPHRFLRLIE (72 aa)) enclose the S4 RNA-binding domain.

This sequence belongs to the eukaryotic ribosomal protein eS4 family.

The protein is Small ribosomal subunit protein eS4 of Korarchaeum cryptofilum (strain OPF8).